The chain runs to 324 residues: UDP-N-acetylenolpyruvoylglucosamine reductase (324 aa).

The FAD-binding PCMH-type domain maps to 39-220 (RTGGLAELFY…RAAMHEVALH (182 aa)). Arginine 185 is an active-site residue. Residue serine 234 is the Proton donor of the active site. Glutamate 304 is an active-site residue.

Belongs to the MurB family. FAD serves as cofactor.

Its subcellular location is the cytoplasm. The enzyme catalyses UDP-N-acetyl-alpha-D-muramate + NADP(+) = UDP-N-acetyl-3-O-(1-carboxyvinyl)-alpha-D-glucosamine + NADPH + H(+). It participates in cell wall biogenesis; peptidoglycan biosynthesis. In terms of biological role, cell wall formation. The sequence is that of UDP-N-acetylenolpyruvoylglucosamine reductase from Bartonella bacilliformis (strain ATCC 35685 / KC583 / Herrer 020/F12,63).